The primary structure comprises 554 residues: Probable phospholipase D F09G2.8 (554 aa).

The Cytoplasmic portion of the chain corresponds to 1 to 123 (MPLRLINFRQ…GNSRNRIIKP (123 aa)). The helical; Signal-anchor for type II membrane protein transmembrane segment at 124 to 144 (ACVPISIVSLFIIALVFLPLF) threads the bilayer. Over 145-554 (NEEDLASPIK…DWNSEYSKDL (410 aa)) the chain is Extracellular. 4 N-linked (GlcNAc...) asparagine glycosylation sites follow: Asn-181, Asn-208, Asn-244, and Asn-266. Residues 272-299 (GSGIIHTKFILSDIATLYIGSANMDWKS) enclose the PLD phosphodiesterase 1 domain. Active-site residues include His-277, Lys-279, and Asp-284. N-linked (GlcNAc...) asparagine glycans are attached at residues Asn-333, Asn-350, Asn-468, and Asn-513. Residues 492 to 518 (FTRVNHAKYMVTEDIAYIGTSNWSGDY) form the PLD phosphodiesterase 2 domain.

It belongs to the phospholipase D family.

It localises to the membrane. It catalyses the reaction a 1,2-diacyl-sn-glycero-3-phosphocholine + H2O = a 1,2-diacyl-sn-glycero-3-phosphate + choline + H(+). The polypeptide is Probable phospholipase D F09G2.8 (Caenorhabditis elegans).